Reading from the N-terminus, the 198-residue chain is Endoribonuclease YbeY (198 aa).

Zn(2+) is bound by residues histidine 156, histidine 160, and histidine 166.

It belongs to the endoribonuclease YbeY family. Requires Zn(2+) as cofactor.

It localises to the cytoplasm. Functionally, single strand-specific metallo-endoribonuclease involved in late-stage 70S ribosome quality control and in maturation of the 3' terminus of the 16S rRNA. The chain is Endoribonuclease YbeY from Cupriavidus necator (strain ATCC 17699 / DSM 428 / KCTC 22496 / NCIMB 10442 / H16 / Stanier 337) (Ralstonia eutropha).